A 297-amino-acid chain; its full sequence is ATP synthase subunit a (297 aa).

Helical transmembrane passes span proline 38–leucine 58, glycine 77–leucine 97, leucine 107–isoleucine 127, serine 133–valine 153, threonine 174–isoleucine 194, valine 202–leucine 222, valine 230–phenylalanine 250, and isoleucine 252–glutamine 272.

The protein belongs to the ATPase A chain family. As to quaternary structure, F-type ATPases have 2 components, CF(1) - the catalytic core - and CF(0) - the membrane proton channel. CF(1) has five subunits: alpha(3), beta(3), gamma(1), delta(1), epsilon(1). CF(0) has three main subunits: a(1), b(2) and c(9-12). The alpha and beta chains form an alternating ring which encloses part of the gamma chain. CF(1) is attached to CF(0) by a central stalk formed by the gamma and epsilon chains, while a peripheral stalk is formed by the delta and b chains.

The protein localises to the cell membrane. In terms of biological role, key component of the proton channel; it plays a direct role in the translocation of protons across the membrane. The sequence is that of ATP synthase subunit a from Mycoplasmoides gallisepticum (strain R(low / passage 15 / clone 2)) (Mycoplasma gallisepticum).